We begin with the raw amino-acid sequence, 227 residues long: 4'-phosphopantetheinyl transferase PptT (227 aa).

Residues R48, R56, 75–78 (KGDK), 92–93 (TH), and D114 contribute to the CoA site. Residues D114, A115, and E116 each contribute to the Mg(2+) site. Residues E157, K161, and L171 each contribute to the CoA site.

Belongs to the P-Pant transferase superfamily. Mg(2+) is required as a cofactor.

It catalyses the reaction apo-[ACP] + CoA = holo-[ACP] + adenosine 3',5'-bisphosphate + H(+). Inhibited by the amidino-urea compound 1-[(2,6-diethylphenyl)-3-N-ethylcarbamimodoyl]urea (compound 8918). It acts by binding to the phosphopantetheine pocket in the active site. Inhibition by compound 8918 kills M.tuberculosis. In terms of biological role, transfers the 4'-phosphopantetheine moiety from coenzyme A to a Ser of acyl-carrier-protein. Involved in post-translational modification of various type-I polyketide synthases required for the formation of both mycolic acids and lipid virulence factors. Acts on Pks13, Mas, PpsA, PpsB, PpsC and PpsD. Also acts on AcpM, the meromycolate extension acyl carrier protein. In addition, is involved in the activation of the acyl carrier protein MbtL and the nonribosomal peptides synthases MbtB and MbtE, which are involved in the biosynthesis of the siderophore mycobactin. Required for the replication and survival of Mycobacterium during the acute and chronic phases of infection in mice. The polypeptide is 4'-phosphopantetheinyl transferase PptT (Mycobacterium tuberculosis (strain ATCC 25618 / H37Rv)).